The chain runs to 412 residues: Cathepsin D (412 aa).

A signal peptide spans 1–20 (MQPSSLLPLALCLLAAPASA). Positions 21–64 (LVRIPLHKFTSIRRTMSEVGGSVEDLIAKGPVSKYSQAVPAVTE) are cleaved as a propeptide — activation peptide. A glycan (O-linked (GalNAc...) threonine) is linked at T63. Residues 79-407 (YYGEIGIGTP…DRDNNRVGFA (329 aa)) enclose the Peptidase A1 domain. Disulfide bonds link C91-C160 and C110-C117. D97 is a catalytic residue. 2 N-linked (GlcNAc...) asparagine glycosylation sites follow: N134 and N263. C286 and C290 are joined by a disulfide. The active site involves D295. A disulfide bond links C329 and C366.

This sequence belongs to the peptidase A1 family. As to quaternary structure, consists of a light chain and a heavy chain. Interacts with ADAM30; this leads to activation of CTSD. Interacts with GRN; stabilizes CTSD; increases its proteolytic activity. Post-translationally, N- and O-glycosylated. Undergoes proteolytic cleavage and activation by ADAM30. In terms of processing, as well as the major heavy chain which starts at Leu-169, 2 minor forms starting at Gly-170 and Gly-171 have been identified. An additional form starting at Ala-168 has also been identified. Expressed in the aorta extracellular space (at protein level). Expressed in liver (at protein level).

The protein resides in the lysosome. It is found in the melanosome. Its subcellular location is the secreted. The protein localises to the extracellular space. The catalysed reaction is Specificity similar to, but narrower than, that of pepsin A. Does not cleave the 4-Gln-|-His-5 bond in B chain of insulin.. In terms of biological role, acid protease active in intracellular protein breakdown. Plays a role in APP processing following cleavage and activation by ADAM30 which leads to APP degradation. Involved in the pathogenesis of several diseases such as breast cancer and possibly Alzheimer disease. This is Cathepsin D (CTSD) from Homo sapiens (Human).